Consider the following 179-residue polypeptide: 3-hydroxyanthranilate 3,4-dioxygenase (179 aa).

Position 47 (Arg-47) interacts with O2. The Fe cation site is built by His-51, Glu-57, and His-96. Residue Glu-57 participates in substrate binding. Arg-100 and Glu-110 together coordinate substrate. Positions 125, 128, 162, and 165 each coordinate Fe cation.

The protein belongs to the 3-HAO family. The cofactor is Fe(2+).

The catalysed reaction is 3-hydroxyanthranilate + O2 = (2Z,4Z)-2-amino-3-carboxymuconate 6-semialdehyde. It functions in the pathway cofactor biosynthesis; NAD(+) biosynthesis; quinolinate from L-kynurenine: step 3/3. Functionally, catalyzes the oxidative ring opening of 3-hydroxyanthranilate to 2-amino-3-carboxymuconate semialdehyde, which spontaneously cyclizes to quinolinate. This Bacillus cereus (strain 03BB102) protein is 3-hydroxyanthranilate 3,4-dioxygenase.